We begin with the raw amino-acid sequence, 616 residues long: Chaperone protein HscA (616 aa).

It belongs to the heat shock protein 70 family.

Its function is as follows. Chaperone involved in the maturation of iron-sulfur cluster-containing proteins. Has a low intrinsic ATPase activity which is markedly stimulated by HscB. Involved in the maturation of IscU. This chain is Chaperone protein HscA, found in Escherichia coli O6:H1 (strain CFT073 / ATCC 700928 / UPEC).